Reading from the N-terminus, the 126-residue chain is Small ribosomal subunit protein bS6 (126 aa).

Residues 101-126 (VMMKAKEERTAKREDAAPRAEEAAAE) form a disordered region. Positions 104–126 (KAKEERTAKREDAAPRAEEAAAE) are enriched in basic and acidic residues.

Belongs to the bacterial ribosomal protein bS6 family.

Binds together with bS18 to 16S ribosomal RNA. The sequence is that of Small ribosomal subunit protein bS6 from Aliivibrio salmonicida (strain LFI1238) (Vibrio salmonicida (strain LFI1238)).